We begin with the raw amino-acid sequence, 288 residues long: Probable ketoamine kinase VC_1539 (288 aa).

92 to 94 (NYL) contributes to the ATP binding site. Asp-195 serves as the catalytic Proton acceptor.

This sequence belongs to the fructosamine kinase family.

Its function is as follows. Ketoamine kinase that phosphorylates ketoamines on the third carbon of the sugar moiety to generate ketoamine 3-phosphate. This is Probable ketoamine kinase VC_1539 from Vibrio cholerae serotype O1 (strain ATCC 39315 / El Tor Inaba N16961).